The sequence spans 139 residues: Translation initiation factor 2 subunit beta (139 aa).

The protein belongs to the eIF-2-beta/eIF-5 family. In terms of assembly, heterotrimer composed of an alpha, a beta and a gamma chain.

In terms of biological role, eIF-2 functions in the early steps of protein synthesis by forming a ternary complex with GTP and initiator tRNA. The sequence is that of Translation initiation factor 2 subunit beta from Nanoarchaeum equitans (strain Kin4-M).